The chain runs to 331 residues: tRNA pseudouridine synthase B (331 aa).

Residue aspartate 51 is the Nucleophile of the active site.

The protein belongs to the pseudouridine synthase TruB family. Type 1 subfamily.

It carries out the reaction uridine(55) in tRNA = pseudouridine(55) in tRNA. Responsible for synthesis of pseudouridine from uracil-55 in the psi GC loop of transfer RNAs. The sequence is that of tRNA pseudouridine synthase B from Verminephrobacter eiseniae (strain EF01-2).